Consider the following 169-residue polypeptide: Lipoprotein signal peptidase (169 aa).

The next 4 membrane-spanning stretches (helical) occupy residues 4–24 (PICSTGLRWLWLAVVVVILDI), 29–49 (WVMAHFALYESVPLIPFFNLT), 70–90 (WFFAGIAIGISVVLMVMMYRS), and 101–121 (YALIIGGALGNLYDRLVHGAV). Residues D123 and D141 contribute to the active site. The helical transmembrane segment at 137–157 (FNLADVAICIGAALVIFEGFL) threads the bilayer.

The protein belongs to the peptidase A8 family.

The protein localises to the cell inner membrane. The enzyme catalyses Release of signal peptides from bacterial membrane prolipoproteins. Hydrolyzes -Xaa-Yaa-Zaa-|-(S,diacylglyceryl)Cys-, in which Xaa is hydrophobic (preferably Leu), and Yaa (Ala or Ser) and Zaa (Gly or Ala) have small, neutral side chains.. It participates in protein modification; lipoprotein biosynthesis (signal peptide cleavage). In terms of biological role, this protein specifically catalyzes the removal of signal peptides from prolipoproteins. This chain is Lipoprotein signal peptidase, found in Yersinia pestis bv. Antiqua (strain Antiqua).